The primary structure comprises 159 residues: MIKLTDEGEKMLRECAESLVDLFAKNRIVKIKAKVTSGLGEGRIFVSLPYYMEAFNKFLGFQPYPGTLNAVIYDRISMENRLLLDLSRGILIPEHKEPNRVLGSVKAFPASINSVSPVAVVIPTRTTHPKSVVELLSPHKLREKLELEDGDEIEIEVYL.

38–43 is a binding site for CDP; that stretch reads GLGEGR. Residues threonine 67 and asparagine 69 each contribute to the Mg(2+) site. Threonine 126 and glutamate 134 together coordinate FMN. CDP is bound at residue 139-142; the sequence is HKLR.

This sequence belongs to the archaeal riboflavin kinase family. The cofactor is Mg(2+).

The catalysed reaction is riboflavin + CTP = CDP + FMN + H(+). The protein operates within cofactor biosynthesis; FMN biosynthesis; FMN from riboflavin (CTP route): step 1/1. In terms of biological role, catalyzes the CTP-dependent phosphorylation of riboflavin (vitamin B2) to form flavin mononucleotide (FMN). In Sulfolobus acidocaldarius (strain ATCC 33909 / DSM 639 / JCM 8929 / NBRC 15157 / NCIMB 11770), this protein is Riboflavin kinase.